The chain runs to 301 residues: Protoheme IX farnesyltransferase 1 (301 aa).

Helical transmembrane passes span 29-49 (VVALMLLTVLVGMCLAVPTAV), 51-71 (VQPLIAGMFGIALMAGSAAAL), 101-121 (ALIFAASIGGLGFVVLYVLVN), 123-143 (LTAWLTFASLIGYALVYTAYL), 150-170 (NIVIGGLAGAMPPLLGWTAVT), 177-197 (ALLLVIIIFTWTPPHFWALAI), 223-243 (CILLYTVLLAIACLLPVLVGM), 244-264 (CGPMYFVCSSLLSSVFIYKAW), and 281-301 (FSIYHLMLLFMALLIDHYLWS).

Belongs to the UbiA prenyltransferase family. Protoheme IX farnesyltransferase subfamily.

It localises to the cell inner membrane. The catalysed reaction is heme b + (2E,6E)-farnesyl diphosphate + H2O = Fe(II)-heme o + diphosphate. It functions in the pathway porphyrin-containing compound metabolism; heme O biosynthesis; heme O from protoheme: step 1/1. Its function is as follows. Converts heme B (protoheme IX) to heme O by substitution of the vinyl group on carbon 2 of heme B porphyrin ring with a hydroxyethyl farnesyl side group. The protein is Protoheme IX farnesyltransferase 1 of Shewanella putrefaciens (strain CN-32 / ATCC BAA-453).